The sequence spans 283 residues: Protein FAM170A (283 aa).

Disordered stretches follow at residues 1-54 (MKRR…RSQH) and 123-171 (GTPP…AKTP). Polar residues predominate over residues 127–138 (SDVSTRNLLSDS). Basic and acidic residues predominate over residues 142–153 (GEEKEHEERTES). Threonine 170 is subject to Phosphothreonine. The segment at 181-205 (FRCMACCRVFTTMEALQEHVQFGIR) adopts a C2H2-type; degenerate zinc-finger fold. The tract at residues 223-283 (NMESESTQDE…VFHSPKDRNS (61 aa)) is disordered. Acidic residues predominate over residues 228-246 (STQDEQEEENGNEKEEEEK). Serine 268 is modified (phosphoserine).

This sequence belongs to the FAM170 family.

It is found in the nucleus. In terms of biological role, acts as a nuclear transcription factor that positively regulates the expression of heat shock genes. Binds to heat shock promoter elements (HSE). The chain is Protein FAM170A (FAM170A) from Macaca fascicularis (Crab-eating macaque).